Here is a 273-residue protein sequence, read N- to C-terminus: Large ribosomal subunit protein uL2c (273 aa).

The disordered stretch occupies residues 223-273; it reads MNPVDHPHGGGEGRAPIGRKKPTTPWGYPALGRRSRKRNKYSDSFILRRRK.

Belongs to the universal ribosomal protein uL2 family. In terms of assembly, part of the 50S ribosomal subunit.

It localises to the plastid. The protein resides in the chloroplast. In Calycanthus floridus var. glaucus (Eastern sweetshrub), this protein is Large ribosomal subunit protein uL2c (rpl2).